The following is a 251-amino-acid chain: 5-oxoprolinase subunit A (251 aa).

This sequence belongs to the LamB/PxpA family. In terms of assembly, forms a complex composed of PxpA, PxpB and PxpC.

The enzyme catalyses 5-oxo-L-proline + ATP + 2 H2O = L-glutamate + ADP + phosphate + H(+). Functionally, catalyzes the cleavage of 5-oxoproline to form L-glutamate coupled to the hydrolysis of ATP to ADP and inorganic phosphate. This chain is 5-oxoprolinase subunit A, found in Tolumonas auensis (strain DSM 9187 / NBRC 110442 / TA 4).